The sequence spans 367 residues: Phosphoglycerate kinase (367 aa).

Valine 1, aspartate 2, phenylalanine 3, asparagine 4, arginine 17, serine 40, histidine 41, glycine 43, arginine 44, leucine 98, arginine 99, histidine 146, and arginine 147 together coordinate (2R)-3-phosphoglycerate. Glycine 190 lines the ADP pocket. Glycine 190 serves as a coordination point for CDP. AMP contacts are provided by alanine 191 and lysine 192. An ATP-binding site is contributed by alanine 191. Alanine 191 contributes to the Mg(2+) binding site. Residues alanine 194 and aspartate 195 each contribute to the Mg(2+) site. Aspartate 195 lines the CDP pocket. Lysine 196 is an AMP binding site. An ATP-binding site is contributed by lysine 196. Glycine 214 provides a ligand contact to ADP. Residue glycine 214 coordinates CDP. AMP-binding residues include glycine 215 and glycine 289. Residues glycine 215 and glycine 289 each contribute to the ATP site. CDP-binding residues include glycine 314 and phenylalanine 319. Phenylalanine 319 is a binding site for ADP. Glutamate 320 contributes to the AMP binding site. Residues glutamate 320, aspartate 351, and threonine 352 each contribute to the ATP site. Aspartate 351 serves as a coordination point for Mg(2+).

Belongs to the phosphoglycerate kinase family. Monomer. Mg(2+) is required as a cofactor.

The catalysed reaction is (2R)-3-phosphoglycerate + ATP = (2R)-3-phospho-glyceroyl phosphate + ADP. It functions in the pathway carbohydrate degradation; glycolysis; pyruvate from D-glyceraldehyde 3-phosphate: step 2/5. This chain is Phosphoglycerate kinase (PGK), found in Paramecium primaurelia.